We begin with the raw amino-acid sequence, 245 residues long: Uridylate kinase (245 aa).

An ATP-binding site is contributed by 12-15 (KISG). G55 is a UMP binding site. Positions 56 and 60 each coordinate ATP. Residues D76 and 137-144 (AGAPYLTT) contribute to the UMP site. 3 residues coordinate ATP: T164, Y171, and D174.

Belongs to the UMP kinase family. As to quaternary structure, homohexamer.

Its subcellular location is the cytoplasm. It catalyses the reaction UMP + ATP = UDP + ADP. It participates in pyrimidine metabolism; CTP biosynthesis via de novo pathway; UDP from UMP (UMPK route): step 1/1. Its activity is regulated as follows. Inhibited by UTP. Catalyzes the reversible phosphorylation of UMP to UDP. The chain is Uridylate kinase from Chlamydia trachomatis serovar A (strain ATCC VR-571B / DSM 19440 / HAR-13).